Here is a 22-residue protein sequence, read N- to C-terminus: Phospholipase A2 (22 aa).

This sequence belongs to the phospholipase A2 family. The cofactor is Ca(2+).

The protein resides in the secreted. The catalysed reaction is a 1,2-diacyl-sn-glycero-3-phosphocholine + H2O = a 1-acyl-sn-glycero-3-phosphocholine + a fatty acid + H(+). Functionally, PA2 catalyzes the calcium-dependent hydrolysis of the 2-acyl groups in 3-sn-phosphoglycerides. In Struthio camelus (Common ostrich), this protein is Phospholipase A2.